Here is a 227-residue protein sequence, read N- to C-terminus: ATP-dependent dethiobiotin synthetase BioD (227 aa).

13-18 provides a ligand contact to ATP; sequence DAGKTT. Residue T17 coordinates Mg(2+). Residue K38 is part of the active site. ATP-binding positions include D55, 118 to 121, 178 to 179, 207 to 209, and E214; these read EGAG, NR, and PYI. D55 and E118 together coordinate Mg(2+).

Belongs to the dethiobiotin synthetase family. In terms of assembly, homodimer. It depends on Mg(2+) as a cofactor.

The protein resides in the cytoplasm. It catalyses the reaction (7R,8S)-7,8-diammoniononanoate + CO2 + ATP = (4R,5S)-dethiobiotin + ADP + phosphate + 3 H(+). It participates in cofactor biosynthesis; biotin biosynthesis; biotin from 7,8-diaminononanoate: step 1/2. Catalyzes a mechanistically unusual reaction, the ATP-dependent insertion of CO2 between the N7 and N8 nitrogen atoms of 7,8-diaminopelargonic acid (DAPA, also called 7,8-diammoniononanoate) to form a ureido ring. This chain is ATP-dependent dethiobiotin synthetase BioD, found in Tolumonas auensis (strain DSM 9187 / NBRC 110442 / TA 4).